Consider the following 195-residue polypeptide: IMP cyclohydrolase (195 aa).

The protein belongs to the archaeal IMP cyclohydrolase family.

The catalysed reaction is IMP + H2O = 5-formamido-1-(5-phospho-D-ribosyl)imidazole-4-carboxamide. It functions in the pathway purine metabolism; IMP biosynthesis via de novo pathway; IMP from 5-formamido-1-(5-phospho-D-ribosyl)imidazole-4-carboxamide: step 1/1. Functionally, catalyzes the cyclization of 5-formylamidoimidazole-4-carboxamide ribonucleotide to IMP. In Haloquadratum walsbyi (strain DSM 16790 / HBSQ001), this protein is IMP cyclohydrolase.